Reading from the N-terminus, the 132-residue chain is Dehydratase CTB10 (132 aa).

Residues 21–117 (PDQSEEDHHN…IPDHFNFADM (97 aa)) form the EthD domain.

This sequence belongs to the tpcK family.

It participates in mycotoxin biosynthesis. Functionally, dehydratase; part of the gene cluster that mediates the biosynthesis of cercosporin, a light-activated, non-host-selective toxin. The perylenequinone chromophore of cercosporin absorbs light energy to attain an electronically-activated triplet state and produces active oxygen species such as the hydroxyl radical, superoxide, hydrogen peroxide or singlet oxygen upon reaction with oxygen molecules. These reactive oxygen species cause damage to various cellular components including lipids, proteins and nucleic acids. The first step of cercosporin biosynthesis is performed by the polyketide synthase CTB1 which catalyzes the formation of nor-toralactone. The starter unit acyltransferase (SAT) domain of CTB1 initiates polyketide extension by the selective utilization of acetyl-CoA, which is elongated to the heptaketide in the beta-ketoacyl synthase (KS) domain by successive condensations with six malonyl units introduced by the malonyl acyltransferase (MAT) domain. The product template (PT) domain catalyzes C4-C9 and C2-C11 aldol cyclizations and dehydrations to a trihydroxynaphthalene, which is thought to be delivered to the thioesterase (TE) domain for product release. The bifunctional enzyme CTB3 then methylates nor-toralactone to toralactone before conducting an unusual oxidative aromatic ring opening. The O-methyltransferase CTB2 further methylates the nascent OH-6 of the CBT3 product, blocking further oxidation at this site before the reductase CTB6 reduces the 2-oxopropyl ketone at position C7, giving naphthalene. The FAD-dependent monooxygenase CTB5 in concert with the multicopper oxidase CTB12 are responsible for homodimerization of naphthalene with CTB7 installing the dioxepine moiety, finally producing cercosporin. The fasciclin domain-containing protein CTB11 might act with CTB5 and CTB12 whereas the roles of CTB9 and CTB10 have still to be elucidated. This Cercospora beticola (Sugarbeet leaf spot fungus) protein is Dehydratase CTB10.